Consider the following 541-residue polypeptide: Chaperonin GroEL 1 (541 aa).

Residues 29 to 32 (TLGP), 86 to 90 (DGTTT), Gly-413, 477 to 479 (NAA), and Asp-493 each bind ATP.

Belongs to the chaperonin (HSP60) family. Forms a cylinder of 14 subunits composed of two heptameric rings stacked back-to-back. Interacts with the co-chaperonin GroES.

It localises to the cytoplasm. It carries out the reaction ATP + H2O + a folded polypeptide = ADP + phosphate + an unfolded polypeptide.. Functionally, together with its co-chaperonin GroES, plays an essential role in assisting protein folding. The GroEL-GroES system forms a nano-cage that allows encapsulation of the non-native substrate proteins and provides a physical environment optimized to promote and accelerate protein folding. The protein is Chaperonin GroEL 1 of Nocardioides sp. (strain ATCC BAA-499 / JS614).